Consider the following 194-residue polypeptide: Crossover junction endodeoxyribonuclease RuvC (194 aa).

Residues aspartate 7, glutamate 68, and aspartate 141 contribute to the active site. 3 residues coordinate Mg(2+): aspartate 7, glutamate 68, and aspartate 141.

Belongs to the RuvC family. As to quaternary structure, homodimer which binds Holliday junction (HJ) DNA. The HJ becomes 2-fold symmetrical on binding to RuvC with unstacked arms; it has a different conformation from HJ DNA in complex with RuvA. In the full resolvosome a probable DNA-RuvA(4)-RuvB(12)-RuvC(2) complex forms which resolves the HJ. Requires Mg(2+) as cofactor.

The protein resides in the cytoplasm. It carries out the reaction Endonucleolytic cleavage at a junction such as a reciprocal single-stranded crossover between two homologous DNA duplexes (Holliday junction).. Functionally, the RuvA-RuvB-RuvC complex processes Holliday junction (HJ) DNA during genetic recombination and DNA repair. Endonuclease that resolves HJ intermediates. Cleaves cruciform DNA by making single-stranded nicks across the HJ at symmetrical positions within the homologous arms, yielding a 5'-phosphate and a 3'-hydroxyl group; requires a central core of homology in the junction. The consensus cleavage sequence is 5'-(A/T)TT(C/G)-3'. Cleavage occurs on the 3'-side of the TT dinucleotide at the point of strand exchange. HJ branch migration catalyzed by RuvA-RuvB allows RuvC to scan DNA until it finds its consensus sequence, where it cleaves and resolves the cruciform DNA. The protein is Crossover junction endodeoxyribonuclease RuvC of Bifidobacterium longum (strain DJO10A).